A 736-amino-acid chain; its full sequence is Polyribonucleotide nucleotidyltransferase (736 aa).

Residues Asp-493 and Asp-499 each coordinate Mg(2+). One can recognise a KH domain in the interval 560–619 (PQHAELVVNPDAIRMIIGPGGKNIKQITTVTGAAIDINDSGKISIFAPTSEAMEQAKQMI). The 75-residue stretch at 629 to 703 (GKNYKGKVRK…SRKAVLLEEE (75 aa)) folds into the S1 motif domain. The segment at 710–736 (EESSRFSKGNRNGDRSRHNNRERTRRT) is disordered. The segment covering 720-736 (RNGDRSRHNNRERTRRT) has biased composition (basic and acidic residues).

It belongs to the polyribonucleotide nucleotidyltransferase family. Requires Mg(2+) as cofactor.

The protein localises to the cytoplasm. The catalysed reaction is RNA(n+1) + phosphate = RNA(n) + a ribonucleoside 5'-diphosphate. Its function is as follows. Involved in mRNA degradation. Catalyzes the phosphorolysis of single-stranded polyribonucleotides processively in the 3'- to 5'-direction. The polypeptide is Polyribonucleotide nucleotidyltransferase (Lawsonia intracellularis (strain PHE/MN1-00)).